The sequence spans 1302 residues: Zinc finger protein 536 (1302 aa).

The interval 1 to 26 (MEEASLCLGVSSTAPEAEPHLSGPVL) is disordered. C2H2-type zinc fingers lie at residues 130 to 152 (YPCP…MRTH), 158 to 180 (FKCP…LRTH), 274 to 297 (FRCT…RILH), 300 to 323 (YKCT…EKAH), 345 to 367 (FRCE…MRKH), 373 to 395 (HCCQ…MKVH), and 631 to 653 (TECP…SRVH). The tract at residues 650–736 (SRVHKRDRKS…IGEEAGRAGG (87 aa)) is disordered. Positions 657–676 (RKSDEDALHVGVGLEERRGS) are enriched in basic and acidic residues. The span at 677–698 (GSDQESQSVSRSTTPGSSNVTE) shows a compositional bias: polar residues. C2H2-type zinc fingers lie at residues 753–775 (KDCP…LRIH) and 781–803 (YKCP…LERH). 4 disordered regions span residues 804–832 (HRER…SKAP), 855–897 (GPAS…SKSS), 935–988 (KDTK…APTL), and 1133–1261 (NKNT…GLEK). Residues Ser-828 and Ser-829 each carry the phosphoserine modification. Residues 869–883 (GDHSGQATGMPSELS) are compositionally biased toward polar residues. The segment covering 935-973 (KDTKDKVPSDAHPMKAHTAEGGEEKASMKPSQRKSEKSQ) has biased composition (basic and acidic residues). 2 stretches are compositionally biased toward acidic residues: residues 1161 to 1171 (DLSDIASSEDM) and 1179 to 1188 (NEDEELDTEP). Positions 1198–1212 (LSKDGSSEGGDSLLS) are enriched in low complexity.

It belongs to the krueppel C2H2-type zinc-finger protein family. As to expression, expressed predominantly in the brain, while a weak signal is also detected in the heart and testis. Expression is abundant in neuronal cells of the cerebral cortex, hippocampus and hypothalamic area (at protein level).

The protein resides in the nucleus. Transcriptional repressor that negatively regulates neuron differentiation by repressing retinoic acid-induced gene transcription. Binds and interrupts RARA from binding to retinoic acid response elements (RARE) composed of tandem 5'-AGGTCA-3' sites known as DR1-DR5. Recognizes and binds 2 copies of the core DNA sequence 5'-CCCCCA-3'. The chain is Zinc finger protein 536 (Znf536) from Mus musculus (Mouse).